The chain runs to 492 residues: Ribose import ATP-binding protein RbsA (492 aa).

ABC transporter domains lie at 3–239 and 238–492; these read IDMR…VGRK and RKLE…TGGK. 35–42 contacts ATP; the sequence is GENGAGKS.

This sequence belongs to the ABC transporter superfamily. Ribose importer (TC 3.A.1.2.1) family. In terms of assembly, the complex is composed of an ATP-binding protein (RbsA), two transmembrane proteins (RbsC) and a solute-binding protein (RbsB).

The protein resides in the cell membrane. It catalyses the reaction D-ribose(out) + ATP + H2O = D-ribose(in) + ADP + phosphate + H(+). Part of the ABC transporter complex RbsABC involved in ribose import. Responsible for energy coupling to the transport system. In Streptococcus agalactiae serotype Ia (strain ATCC 27591 / A909 / CDC SS700), this protein is Ribose import ATP-binding protein RbsA.